The following is a 176-amino-acid chain: Large ribosomal subunit protein uL10 (176 aa).

The protein belongs to the universal ribosomal protein uL10 family. Part of the ribosomal stalk of the 50S ribosomal subunit. The N-terminus interacts with L11 and the large rRNA to form the base of the stalk. The C-terminus forms an elongated spine to which L12 dimers bind in a sequential fashion forming a multimeric L10(L12)X complex.

Its function is as follows. Forms part of the ribosomal stalk, playing a central role in the interaction of the ribosome with GTP-bound translation factors. This is Large ribosomal subunit protein uL10 from Leuconostoc citreum (strain KM20).